A 277-amino-acid chain; its full sequence is uncharacterized protein (277 aa).

The segment at 256 to 277 (HTTTTTTSPSFTIPSNSSKGVS) is disordered.

This protein may be involved in virus assembly. Essential for virus function. This is an uncharacterized protein from Saccharolobus solfataricus (Sulfolobus solfataricus).